We begin with the raw amino-acid sequence, 569 residues long: Proline--tRNA ligase (569 aa).

The protein belongs to the class-II aminoacyl-tRNA synthetase family. ProS type 1 subfamily. In terms of assembly, homodimer.

It is found in the cytoplasm. It carries out the reaction tRNA(Pro) + L-proline + ATP = L-prolyl-tRNA(Pro) + AMP + diphosphate. Catalyzes the attachment of proline to tRNA(Pro) in a two-step reaction: proline is first activated by ATP to form Pro-AMP and then transferred to the acceptor end of tRNA(Pro). As ProRS can inadvertently accommodate and process non-cognate amino acids such as alanine and cysteine, to avoid such errors it has two additional distinct editing activities against alanine. One activity is designated as 'pretransfer' editing and involves the tRNA(Pro)-independent hydrolysis of activated Ala-AMP. The other activity is designated 'posttransfer' editing and involves deacylation of mischarged Ala-tRNA(Pro). The misacylated Cys-tRNA(Pro) is not edited by ProRS. The chain is Proline--tRNA ligase from Dehalococcoides mccartyi (strain CBDB1).